The sequence spans 860 residues: Leucine--tRNA ligase (860 aa).

The 'HIGH' region signature appears at 42–52 (PYPSGRLHMGH). The 'KMSKS' region motif lies at 619–623 (KMSKS). Lys-622 is an ATP binding site.

Belongs to the class-I aminoacyl-tRNA synthetase family.

Its subcellular location is the cytoplasm. It carries out the reaction tRNA(Leu) + L-leucine + ATP = L-leucyl-tRNA(Leu) + AMP + diphosphate. The protein is Leucine--tRNA ligase of Salmonella paratyphi A (strain ATCC 9150 / SARB42).